A 201-amino-acid polypeptide reads, in one-letter code: Anthranilate synthase component 2 (201 aa).

Residues 1–199 form the Glutamine amidotransferase type-1 domain; sequence MLLMIDNYDS…LRQQGGVRGE (199 aa). 52-54 serves as a coordination point for L-glutamine; sequence GPC. Catalysis depends on C79, which acts as the Nucleophile; for GATase activity. L-glutamine is bound by residues Q83 and 129–130; that span reads SL. Catalysis depends on for GATase activity residues H173 and E175.

Heterotetramer consisting of two non-identical subunits: a beta subunit (TrpG) and a large alpha subunit (TrpE).

It carries out the reaction chorismate + L-glutamine = anthranilate + pyruvate + L-glutamate + H(+). It functions in the pathway amino-acid biosynthesis; L-tryptophan biosynthesis; L-tryptophan from chorismate: step 1/5. In terms of biological role, part of a heterotetrameric complex that catalyzes the two-step biosynthesis of anthranilate, an intermediate in the biosynthesis of L-tryptophan. In the first step, the glutamine-binding beta subunit (TrpG) of anthranilate synthase (AS) provides the glutamine amidotransferase activity which generates ammonia as a substrate that, along with chorismate, is used in the second step, catalyzed by the large alpha subunit of AS (TrpE) to produce anthranilate. In the absence of TrpG, TrpE can synthesize anthranilate directly from chorismate and high concentrations of ammonia. The polypeptide is Anthranilate synthase component 2 (Pseudomonas aeruginosa (strain ATCC 15692 / DSM 22644 / CIP 104116 / JCM 14847 / LMG 12228 / 1C / PRS 101 / PAO1)).